The primary structure comprises 419 residues: GTPase Obg (419 aa).

The Obg domain occupies 1 to 156 (MRFVDYVSIE…FYLDLQLKVM (156 aa)). In terms of domain architecture, OBG-type G spans 157–334 (ADIGLVGKPN…LGENQKKLEI (178 aa)). GTP is bound by residues 163-170 (GKPNAGKS), 188-192 (FTTLV), 209-212 (DLPG), 278-281 (NKCD), and 315-317 (NII). 2 residues coordinate Mg(2+): S170 and T190. The region spanning 342 to 419 (IEFNLKAPFL…RIYEFEFHWN (78 aa)) is the OCT domain.

This sequence belongs to the TRAFAC class OBG-HflX-like GTPase superfamily. OBG GTPase family. As to quaternary structure, monomer. It depends on Mg(2+) as a cofactor.

Its subcellular location is the cytoplasm. Its function is as follows. An essential GTPase which binds GTP, GDP and possibly (p)ppGpp with moderate affinity, with high nucleotide exchange rates and a fairly low GTP hydrolysis rate. Plays a role in control of the cell cycle, stress response, ribosome biogenesis and in those bacteria that undergo differentiation, in morphogenesis control. The polypeptide is GTPase Obg (Mesomycoplasma hyopneumoniae (strain 7448) (Mycoplasma hyopneumoniae)).